The sequence spans 386 residues: Cytotoxic granule associated RNA binding protein TIA1 (386 aa).

Position 1 is an N-acetylmethionine (Met1). 3 consecutive RRM domains span residues 7-83 (KTLY…WATT), 106-184 (FHVF…WATR), and 214-286 (CTVY…WGKE). Residues 355-376 (GPNYSVPPPQGQNGSMLPSQPA) form a disordered region.

Homooligomer; homooligomerization is induced by Zn(2+). Interacts with FASTK; the interactions leads to its phosphorylation. Interacts (via RRM1 and the C-terminal glutamine-rich (Q) sequence) with SNRPC/U1-C (via N-terminus); thereby facilitating spliceosomal U1 snRNP recruitment to 5' splice sites. In terms of processing, phosphorylatedby FASTK; phosphorylation occurs after FAS ligation in FAS-mediated apoptosis and before DNA fragmentation.

Its subcellular location is the nucleus. It is found in the cytoplasm. The protein resides in the stress granule. Its function is as follows. RNA-binding protein involved in the regulation of alternative pre-RNA splicing and mRNA translation by binding to uridine-rich (U-rich) RNA sequences. Binds to U-rich sequences immediately downstream from a 5' splice sites in a uridine-rich small nuclear ribonucleoprotein (U snRNP)-dependent fashion, thereby modulating alternative pre-RNA splicing. Preferably binds to the U-rich IAS1 sequence in a U1 snRNP-dependent manner; this binding is optimal if a 5' splice site is adjacent to IAS1. Activates the use of heterologous 5' splice sites; the activation depends on the intron sequence downstream from the 5' splice site, with a preference for a downstream U-rich sequence. By interacting with SNRPC/U1-C, promotes recruitment and binding of spliceosomal U1 snRNP to 5' splice sites followed by U-rich sequences, thereby facilitating atypical 5' splice site recognition by U1 snRNP. Activates splicing of alternative exons with weak 5' splice sites followed by a U-rich stretch on its own pre-mRNA and on TIAR mRNA. Acts as a modulator of alternative splicing for the apoptotic FAS receptor, thereby promoting apoptosis. Binds to the 5' splice site region of FAS intron 5 to promote accumulation of transcripts that include exon 6 at the expense of transcripts in which exon 6 is skipped, thereby leading to the transcription of a membrane-bound apoptotic FAS receptor, which promotes apoptosis. Binds to a conserved AU-rich cis element in COL2A1 intron 2 and modulates alternative splicing of COL2A1 exon 2. Also binds to the equivalent AT-rich element in COL2A1 genomic DNA, and may thereby be involved in the regulation of transcription. Involved in the repression of mRNA translation by binding to AU-rich elements (AREs) located in mRNA 3' untranslated regions (3' UTRs), including target ARE-bearing mRNAs encoding TNF and PTGS2. Also participates in the cellular response to environmental stress, by acting downstream of the stress-induced phosphorylation of EIF2S1/EIF2A to promote the recruitment of untranslated mRNAs to cytoplasmic stress granules (SGs), leading to stress-induced translational arrest. Formation and recruitment to SGs is regulated by Zn(2+). Possesses nucleolytic activity against cytotoxic lymphocyte target cells. The polypeptide is Cytotoxic granule associated RNA binding protein TIA1 (Tia1) (Mus musculus (Mouse)).